We begin with the raw amino-acid sequence, 255 residues long: NADPH-dependent FMN reductase ArsH (255 aa).

Ser43–Ser50 contacts FMN.

The protein belongs to the ArsH family. As to quaternary structure, homotetramer. FMN serves as cofactor.

In terms of biological role, has NADPH-dependent FMN reductase activity and very low azoreductase activity. No activity with NADH. This chain is NADPH-dependent FMN reductase ArsH, found in Shigella flexneri.